Here is a 161-residue protein sequence, read N- to C-terminus: Non-secretory ribonuclease (161 aa).

Residues 1-27 (MVPKLFTSQICLLLLLGLMGVEGSLHA) form the signal peptide. A glycan (C-linked (Man) tryptophan) is linked at Trp-34. Catalysis depends on His-42, which acts as the Proton acceptor. The N-linked (GlcNAc...) asparagine glycan is linked to Asn-44. 4 disulfides stabilise this stretch: Cys-50-Cys-110, Cys-64-Cys-123, Cys-82-Cys-138, and Cys-89-Cys-98. Tyr-60 carries the 3'-nitrotyrosine modification. 65–69 (KNQNT) is a substrate binding site. 4 N-linked (GlcNAc...) asparagine glycosylation sites follow: Asn-86, Asn-92, Asn-111, and Asn-119. Catalysis depends on His-156, which acts as the Proton donor.

The protein belongs to the pancreatic ribonuclease family. In terms of assembly, interacts with and forms a tight 1:1 complex with RNH1. Dimerization of two such complexes may occur.

It localises to the lysosome. Its subcellular location is the cytoplasmic granule. The enzyme catalyses an [RNA] containing cytidine + H2O = an [RNA]-3'-cytidine-3'-phosphate + a 5'-hydroxy-ribonucleotide-3'-[RNA].. The catalysed reaction is an [RNA] containing uridine + H2O = an [RNA]-3'-uridine-3'-phosphate + a 5'-hydroxy-ribonucleotide-3'-[RNA].. Its function is as follows. This is a non-secretory ribonuclease. It is a pyrimidine specific nuclease with a slight preference for U. Cytotoxin and helminthotoxin. Possesses a wide variety of biological activities. In Nomascus leucogenys (Northern white-cheeked gibbon), this protein is Non-secretory ribonuclease (RNASE2).